Reading from the N-terminus, the 173-residue chain is Nucleoside-triphosphatase THEP1 (173 aa).

ATP contacts are provided by residues 9-16 and 97-104; these read GPPGVGKT and LYVIDEVG.

This sequence belongs to the THEP1 NTPase family.

The catalysed reaction is a ribonucleoside 5'-triphosphate + H2O = a ribonucleoside 5'-diphosphate + phosphate + H(+). Its function is as follows. Has nucleotide phosphatase activity towards ATP, GTP, CTP, TTP and UTP. May hydrolyze nucleoside diphosphates with lower efficiency. The protein is Nucleoside-triphosphatase THEP1 of Caldivirga maquilingensis (strain ATCC 700844 / DSM 13496 / JCM 10307 / IC-167).